A 297-amino-acid chain; its full sequence is HTH-type transcriptional regulator ArgP (297 aa).

One can recognise an HTH lysR-type domain in the interval 2 to 58 (FDYKLLSALAAVVEQAGFERAAQVLGLSQSAISQRIKLLEARVGQPVLVRGTPPSPT). A DNA-binding region (H-T-H motif) is located at residues 19–38 (FERAAQVLGLSQSAISQRIK).

It belongs to the LysR transcriptional regulatory family. In terms of assembly, homodimer.

In terms of biological role, controls the transcription of genes involved in arginine and lysine metabolism. The sequence is that of HTH-type transcriptional regulator ArgP from Pseudomonas fluorescens (strain Pf0-1).